Consider the following 200-residue polypeptide: ATP synthase subunit s, mitochondrial (200 aa).

Residues 1–25 (MMMFGKISRQLFSLKKIPWSCDSRY) constitute a mitochondrion transit peptide. Residues 1–61 (MMMFGKISRQ…SEWLLRCGAK (61 aa)) form an N-terminal domain region. Gly-59 is a binding site for Mg(2+). LRR repeat units follow at residues 62–87 (VRYCGHQKWLQDYNKLPGGSVDRYKI), 88–116 (QAIDATDSCIMDIGFDHLVGLEHVERITL), 117–141 (CRCHYIEDNCLQRLSQLENLRKSLL), and 142–173 (ELEIIACGNVTDNGVIALRHFKNLKYLFLSDL). Thr-93 is a Mg(2+) binding site.

Belongs to the ATP synthase subunit s family. As to quaternary structure, homotetramer. Associates with ATP synthase.

Its subcellular location is the mitochondrion. The protein localises to the mitochondrion inner membrane. Involved in regulation of mitochondrial membrane ATP synthase. Necessary for H(+) conduction of ATP synthase. Facilitates energy-driven catalysis of ATP synthesis by blocking a proton leak through an alternative proton exit pathway. The polypeptide is ATP synthase subunit s, mitochondrial (Rattus norvegicus (Rat)).